We begin with the raw amino-acid sequence, 280 residues long: Large ribosomal subunit protein uL2 (280 aa).

Disordered regions lie at residues 33–55 (LTEGLTKSGGRNNTGRITSRRRG) and 199–266 (DNSN…KASQ). Residues 209 to 219 (GRMRHKGKRPS) are compositionally biased toward basic residues.

The protein belongs to the universal ribosomal protein uL2 family. In terms of assembly, part of the 50S ribosomal subunit. Forms a bridge to the 30S subunit in the 70S ribosome.

Functionally, one of the primary rRNA binding proteins. Required for association of the 30S and 50S subunits to form the 70S ribosome, for tRNA binding and peptide bond formation. It has been suggested to have peptidyltransferase activity; this is somewhat controversial. Makes several contacts with the 16S rRNA in the 70S ribosome. The chain is Large ribosomal subunit protein uL2 from Ruegeria sp. (strain TM1040) (Silicibacter sp.).